A 121-amino-acid polypeptide reads, in one-letter code: Small ribosomal subunit protein uS13 (121 aa).

The tract at residues arginine 92 to lysine 121 is disordered. A compositionally biased stretch (basic residues) spans alanine 106–lysine 121.

This sequence belongs to the universal ribosomal protein uS13 family. Part of the 30S ribosomal subunit. Forms a loose heterodimer with protein S19. Forms two bridges to the 50S subunit in the 70S ribosome.

Located at the top of the head of the 30S subunit, it contacts several helices of the 16S rRNA. In the 70S ribosome it contacts the 23S rRNA (bridge B1a) and protein L5 of the 50S subunit (bridge B1b), connecting the 2 subunits; these bridges are implicated in subunit movement. Contacts the tRNAs in the A and P-sites. This is Small ribosomal subunit protein uS13 from Shouchella clausii (strain KSM-K16) (Alkalihalobacillus clausii).